A 500-amino-acid chain; its full sequence is Endothelial lipase (500 aa).

An N-terminal signal peptide occupies residues Met-1–Gly-20. Residues Cys-64 and Cys-77 are joined by a disulfide bond. N-linked (GlcNAc...) asparagine glycosylation is found at Asn-80 and Asn-136. Ser-169 serves as the catalytic Nucleophile. Catalysis depends on Asp-193, which acts as the Charge relay system. Cys-252 and Cys-272 form a disulfide bridge. His-274 (charge relay system) is an active-site residue. Intrachain disulfides connect Cys-297-Cys-316 and Cys-308-Cys-311. A heparin-binding site is contributed by Lys-325 to Lys-337. The 136-residue stretch at Tyr-347–Lys-482 folds into the PLAT domain. Residues Asn-393, Asn-469, and Asn-491 are each glycosylated (N-linked (GlcNAc...) asparagine). Cysteines 463 and 483 form a disulfide.

This sequence belongs to the AB hydrolase superfamily. Lipase family. In terms of assembly, head to tail homodimer. In terms of tissue distribution, high level of expression in the liver, placenta, lung, thyroid, kidney, testis and in the corpus luteum of the ovary. Expressed also in coronary artery endothelial cells, umbilical vein endothelial cells and in hepatocytes and osteosarcoma cell lines. Not detected in heart, brain and muscle.

The protein resides in the secreted. It carries out the reaction a triacylglycerol + H2O = a diacylglycerol + a fatty acid + H(+). The enzyme catalyses a 1,2-diacyl-sn-glycero-3-phosphocholine + H2O = a 2-acyl-sn-glycero-3-phosphocholine + a fatty acid + H(+). It catalyses the reaction 1,2,3-tri-(9Z-octadecenoyl)-glycerol + H2O = di-(9Z)-octadecenoylglycerol + (9Z)-octadecenoate + H(+). The catalysed reaction is 1,2,3-tributanoylglycerol + H2O = dibutanoylglycerol + butanoate + H(+). It carries out the reaction 1,2-dihexadecanoyl-sn-glycero-3-phosphocholine + H2O = hexadecanoyl-sn-glycero-3-phosphocholine + hexadecanoate + H(+). Inhibited by serum and NaCl. In terms of biological role, exerts both phospholipase and triglyceride lipase activities. More active as a phospholipase than a triglyceride lipase. Hydrolyzes triglycerides, both with short-chain fatty acyl groups (tributyrin) and long-chain fatty acyl groups (triolein) with similar levels of activity toward both types of substrates. Hydrolyzes high density lipoproteins (HDL) more efficiently than other lipoproteins. This Homo sapiens (Human) protein is Endothelial lipase (LIPG).